The primary structure comprises 240 residues: Protein RoBo-1 (240 aa).

An N-terminal signal peptide occupies residues 1–26 (MSWFLVLKCLLTVCIISHLSVSSTES). N-linked (GlcNAc...) asparagine glycosylation is present at Asn-42. Disulfide bonds link Cys-47/Cys-76, Cys-81/Cys-102, Cys-103/Cys-108, Cys-127/Cys-151, and Cys-144/Cys-171. N-linked (GlcNAc...) asparagine glycosylation is present at Asn-153.

The protein belongs to the CNF-like-inhibitor family. N-glycosylated. Expressed abundantly in bone, including the lengthening growth plate where cartilage is remodeled into bone.

The protein localises to the secreted. In terms of biological role, may play a novel role in the growth or remodeling of bone. This chain is Protein RoBo-1, found in Rattus norvegicus (Rat).